Here is a 683-residue protein sequence, read N- to C-terminus: Elongation factor G 1 (683 aa).

Residues 3–278 enclose the tr-type G domain; sequence DKMRNIGIMA…AVVDFLPAPN (276 aa). GTP contacts are provided by residues 12 to 19, 76 to 80, and 130 to 133; these read AHIDAGKT, DTPGH, and NKMD.

This sequence belongs to the TRAFAC class translation factor GTPase superfamily. Classic translation factor GTPase family. EF-G/EF-2 subfamily.

The protein localises to the cytoplasm. Its function is as follows. Catalyzes the GTP-dependent ribosomal translocation step during translation elongation. During this step, the ribosome changes from the pre-translocational (PRE) to the post-translocational (POST) state as the newly formed A-site-bound peptidyl-tRNA and P-site-bound deacylated tRNA move to the P and E sites, respectively. Catalyzes the coordinated movement of the two tRNA molecules, the mRNA and conformational changes in the ribosome. In Treponema denticola (strain ATCC 35405 / DSM 14222 / CIP 103919 / JCM 8153 / KCTC 15104), this protein is Elongation factor G 1.